The chain runs to 175 residues: NADH-ubiquinone oxidoreductase chain 6 (175 aa).

The next 5 membrane-spanning stretches (helical) occupy residues 1 to 21 (MMTYIVFILSVIFVIGFVGFS), 25 to 45 (SPIYGGLVLIVSGGVGCGIIM), 47 to 67 (FGGSFLGLMVFLIYLGGMLVV), 88 to 108 (TVMGVFLLGLLMEVMLVLYVL), and 149 to 169 (YGAWVVVVTGWSLLVGVLVIL).

Belongs to the complex I subunit 6 family. As to quaternary structure, core subunit of respiratory chain NADH dehydrogenase (Complex I) which is composed of 45 different subunits.

The protein resides in the mitochondrion inner membrane. It catalyses the reaction a ubiquinone + NADH + 5 H(+)(in) = a ubiquinol + NAD(+) + 4 H(+)(out). In terms of biological role, core subunit of the mitochondrial membrane respiratory chain NADH dehydrogenase (Complex I) which catalyzes electron transfer from NADH through the respiratory chain, using ubiquinone as an electron acceptor. Essential for the catalytic activity and assembly of complex I. This Equus asinus (Donkey) protein is NADH-ubiquinone oxidoreductase chain 6 (MT-ND6).